The following is a 244-amino-acid chain: Probable transcriptional regulatory protein CBU_1566 (244 aa).

Belongs to the TACO1 family.

It is found in the cytoplasm. In Coxiella burnetii (strain RSA 493 / Nine Mile phase I), this protein is Probable transcriptional regulatory protein CBU_1566.